The chain runs to 427 residues: Peptidase B (427 aa).

Mn(2+)-binding residues include K195 and D200. K207 is an active-site residue. Mn(2+) is bound by residues D218, D277, and E279. The active site involves R281.

The protein belongs to the peptidase M17 family. In terms of assembly, homohexamer. Mn(2+) serves as cofactor.

It localises to the cytoplasm. The catalysed reaction is Release of an N-terminal amino acid, Xaa, from a peptide or arylamide. Xaa is preferably Glu or Asp but may be other amino acids, including Leu, Met, His, Cys and Gln.. In terms of biological role, probably plays an important role in intracellular peptide degradation. In Escherichia fergusonii (strain ATCC 35469 / DSM 13698 / CCUG 18766 / IAM 14443 / JCM 21226 / LMG 7866 / NBRC 102419 / NCTC 12128 / CDC 0568-73), this protein is Peptidase B.